Here is a 407-residue protein sequence, read N- to C-terminus: Indoleamine 2,3-dioxygenase 1 (407 aa).

Residue His350 participates in heme b binding. Residues 362–407 (SKKKPTDGDKSEEPSNVESRGTGGTNPMTFLRSVKDTTEKALLSWP) form a disordered region. Over residues 365-374 (KPTDGDKSEE) the composition is skewed to basic and acidic residues.

The protein belongs to the indoleamine 2,3-dioxygenase family. Monomer. Heme b is required as a cofactor. As to expression, highly expressed in epididymis, duodemum, jejunum, ileum, colon and spleen. Highly expressed in epididymis, prostate, duodemum, jejunum, ileum, colon and spleen, not detected in the liver (at protein level). Expressed in tumors only upon exposure to IFN gamma. Constitutively expressed in placenta in trophoblast cells. Expression is restricted to perinuclear regions of primary trophoblast giant cells (TGCs) of fetal origin at mid-gestation (10.5 dpc). After placentation (14 dpc), no IDO expression was detected at the maternal-fetal interface.

The protein resides in the cytoplasm. It is found in the cytosol. The enzyme catalyses D-tryptophan + O2 = N-formyl-D-kynurenine. It catalyses the reaction L-tryptophan + O2 = N-formyl-L-kynurenine. With respect to regulation, activity is inhibited by and MTH-trp (methylthiohydantoin-DL-tryptophan), modestly inhibited by L-1MT (1-methyl-L-tryptophan) but not D-1MT (1-methyl-D-tryptophan). Catalyzes the first and rate limiting step of the catabolism of the essential amino acid tryptophan along the kynurenine pathway. Involved in the peripheral immune tolerance, contributing to maintain homeostasis by preventing autoimmunity or immunopathology that would result from uncontrolled and overreacting immune responses. Tryptophan shortage inhibits T lymphocytes division and accumulation of tryptophan catabolites induces T-cell apoptosis and differentiation of regulatory T-cells. Acts as a suppressor of anti-tumor immunity. Limits the growth of intracellular pathogens by depriving tryptophan. Protects the fetus from maternal immune rejection. This is Indoleamine 2,3-dioxygenase 1 from Mus musculus (Mouse).